The sequence spans 76 residues: Sec-independent protein translocase protein TatA (76 aa).

The chain crosses the membrane as a helical span at residues 1-21 (MGSFSIWHWLIVLVIVMLIFG). Positions 47-76 (NADKPAEEAQPTQQVGGHTIDVEVKEKTKS) are disordered. Residues 66–76 (IDVEVKEKTKS) are compositionally biased toward basic and acidic residues.

The protein belongs to the TatA/E family. The Tat system comprises two distinct complexes: a TatABC complex, containing multiple copies of TatA, TatB and TatC subunits, and a separate TatA complex, containing only TatA subunits. Substrates initially bind to the TatABC complex, which probably triggers association of the separate TatA complex to form the active translocon.

It localises to the cell inner membrane. In terms of biological role, part of the twin-arginine translocation (Tat) system that transports large folded proteins containing a characteristic twin-arginine motif in their signal peptide across membranes. TatA could form the protein-conducting channel of the Tat system. The protein is Sec-independent protein translocase protein TatA of Dechloromonas aromatica (strain RCB).